The primary structure comprises 165 residues: Keratin-associated protein 5-7 (165 aa).

7 tandem repeats follow at residues 35 to 38, 41 to 44, 47 to 50, 116 to 119, 126 to 129, 145 to 148, and 155 to 158. The segment at 35 to 158 is 7 X 4 AA repeats of C-C-X-P; it reads CCVPVCCCKP…CCSQSSCCVP (124 aa).

Belongs to the KRTAP type 5 family. As to quaternary structure, interacts with hair keratins. As to expression, expressed in hair root but not in skin.

Its function is as follows. In the hair cortex, hair keratin intermediate filaments are embedded in an interfilamentous matrix, consisting of hair keratin-associated protein (KRTAP), which are essential for the formation of a rigid and resistant hair shaft through their extensive disulfide bond cross-linking with abundant cysteine residues of hair keratins. The matrix proteins include the high-sulfur and high-glycine-tyrosine keratins. The polypeptide is Keratin-associated protein 5-7 (KRTAP5-7) (Homo sapiens (Human)).